Reading from the N-terminus, the 234-residue chain is Peptidase E (234 aa).

Residues Ser120, Asp135, and His157 each act as charge relay system in the active site.

This sequence belongs to the peptidase S51 family.

It localises to the cytoplasm. It catalyses the reaction Dipeptidase E catalyzes the hydrolysis of dipeptides Asp-|-Xaa. It does not act on peptides with N-terminal Glu, Asn or Gln, nor does it cleave isoaspartyl peptides.. Its function is as follows. Hydrolyzes dipeptides containing N-terminal aspartate residues. May play a role in allowing the cell to use peptide aspartate to spare carbon otherwise required for the synthesis of the aspartate family of amino acids. The chain is Peptidase E from Salmonella gallinarum (strain 287/91 / NCTC 13346).